A 273-amino-acid polypeptide reads, in one-letter code: MMKRQFEDVTRIVIKIGTSSLVLPTGKINLEKIDQLAFVISSLMNKGKEVILVSSGAMGFGLDILKMEKRPTNLAKQQAVSSVGQVAMMSLYSQIFAHYQTNVSQILLTRDVVVFPESLANVTNAFESLISLGIVPIVNENDAVSVDEMDHATKFGDNDRLSAVVAGITKADLLIMLSDIDGLFDKNPTIYEDAQLRSHVAVITQEIIASAGGAGSKFGTGGMLSKVQSAQMVFENKGQMVLMNGANPRDVLRVLEGQPLGTWFKQIEEVTHD.

Lysine 15 is an ATP binding site. The substrate site is built by serine 55, aspartate 142, and asparagine 158. ATP-binding positions include 178–179 (SD) and 220–226 (TGGMLSK).

Belongs to the glutamate 5-kinase family.

It localises to the cytoplasm. It catalyses the reaction L-glutamate + ATP = L-glutamyl 5-phosphate + ADP. It functions in the pathway amino-acid biosynthesis; L-proline biosynthesis; L-glutamate 5-semialdehyde from L-glutamate: step 1/2. Its function is as follows. Catalyzes the transfer of a phosphate group to glutamate to form L-glutamate 5-phosphate. This chain is Glutamate 5-kinase, found in Streptococcus pyogenes serotype M6 (strain ATCC BAA-946 / MGAS10394).